We begin with the raw amino-acid sequence, 146 residues long: MKLHELKPAEGSRKVRNRVGRGIGSGNGKTAGKGHKGQNARSGGGVRLGFEGGQTPLFRRLPKRGFTNINRKEFAIVNLSTLNRFEDGTEVTPELLLETGVISKLNDGVKVLASGAVEKKLTVKAHKFSSSAKEAIEAAGGSVEVI.

The segment covering 1–13 (MKLHELKPAEGSR) has biased composition (basic and acidic residues). Positions 1-52 (MKLHELKPAEGSRKVRNRVGRGIGSGNGKTAGKGHKGQNARSGGGVRLGFEG) are disordered. 2 stretches are compositionally biased toward gly residues: residues 21 to 31 (RGIGSGNGKTA) and 42 to 52 (SGGGVRLGFEG).

The protein belongs to the universal ribosomal protein uL15 family. Part of the 50S ribosomal subunit.

Its function is as follows. Binds to the 23S rRNA. The polypeptide is Large ribosomal subunit protein uL15 (Bacillus cereus (strain B4264)).